The chain runs to 429 residues: Dihydroorotase (429 aa).

Positions 62 and 64 each coordinate Zn(2+). Residues 64–66 and Asn96 contribute to the substrate site; that span reads HFR. Positions 154, 181, and 234 each coordinate Zn(2+). Asn280 contacts substrate. Asp307 is a binding site for Zn(2+). The active site involves Asp307. Substrate contacts are provided by residues His311 and 325–326; that span reads FG.

The protein belongs to the metallo-dependent hydrolases superfamily. DHOase family. Class I DHOase subfamily. Requires Zn(2+) as cofactor.

It carries out the reaction (S)-dihydroorotate + H2O = N-carbamoyl-L-aspartate + H(+). The protein operates within pyrimidine metabolism; UMP biosynthesis via de novo pathway; (S)-dihydroorotate from bicarbonate: step 3/3. Functionally, catalyzes the reversible cyclization of carbamoyl aspartate to dihydroorotate. This chain is Dihydroorotase, found in Latilactobacillus sakei subsp. sakei (strain 23K) (Lactobacillus sakei subsp. sakei).